Here is an 83-residue protein sequence, read N- to C-terminus: uncharacterized protein (83 aa).

Transmembrane regions (helical) follow at residues 4 to 24 (AILS…GVLM), 32 to 52 (IGNI…LKAF), and 54 to 74 (YYDL…IIIG).

Its subcellular location is the cell membrane. This is an uncharacterized protein from Methanocaldococcus jannaschii (strain ATCC 43067 / DSM 2661 / JAL-1 / JCM 10045 / NBRC 100440) (Methanococcus jannaschii).